Reading from the N-terminus, the 84-residue chain is M-zodatoxin-Lt2a (84 aa).

An N-terminal signal peptide occupies residues 1 to 22 (MKYFVIALALAVALVCIAESTA). A propeptide spanning residues 23–58 (YEVNEELENELDDLDDAAWLAVAEELQGLEDFEESR) is cleaved from the precursor. A Processing quadruplet motif motif is present at residues 55 to 58 (EESR).

In terms of processing, cleavage of the propeptide depends on the processing quadruplet motif (XXXR, with at least one of X being E). Expressed by the venom gland.

It localises to the secreted. Its function is as follows. It has antimicrobial activity against Gram-positive bacteria (A.globiformis VKM Ac-1112 (MIC=0.7 uM), and B.subtilis VKM B-501 (MIC=0.4 uM)), Gram-negative bacteria (E.coli DH5-alpha (MIC=1.0 uM), E.coli MH1 (MIC=0.7 uM), and P.aeruginosa PAO1 (MIC=6.7 uM)), and yeasts (P.pastoris GS115 (MIC=6.7 uM), and S.cerevisiae Y190 (MIC=54 uM)). Also has a strong hemolytic activity against rabbit erythrocytes. Causes paralysis, but is not lethal when injected into insect (M.domestica) larvae. The sequence is that of M-zodatoxin-Lt2a from Lachesana tarabaevi (Spider).